Here is a 311-residue protein sequence, read N- to C-terminus: Pyrimidine-specific ribonucleoside hydrolase RihA (311 aa).

Residue histidine 240 is part of the active site.

It belongs to the IUNH family. RihA subfamily.

In terms of biological role, hydrolyzes with equal efficiency cytidine or uridine to ribose and cytosine or uracil, respectively. In Escherichia coli O81 (strain ED1a), this protein is Pyrimidine-specific ribonucleoside hydrolase RihA.